Here is a 277-residue protein sequence, read N- to C-terminus: Bifunctional protein FolD (277 aa).

NADP(+) is bound by residues 160–162, Ser185, and Ile226; that span reads GAS.

Belongs to the tetrahydrofolate dehydrogenase/cyclohydrolase family. As to quaternary structure, homodimer.

The catalysed reaction is (6R)-5,10-methylene-5,6,7,8-tetrahydrofolate + NADP(+) = (6R)-5,10-methenyltetrahydrofolate + NADPH. It catalyses the reaction (6R)-5,10-methenyltetrahydrofolate + H2O = (6R)-10-formyltetrahydrofolate + H(+). It functions in the pathway one-carbon metabolism; tetrahydrofolate interconversion. Catalyzes the oxidation of 5,10-methylenetetrahydrofolate to 5,10-methenyltetrahydrofolate and then the hydrolysis of 5,10-methenyltetrahydrofolate to 10-formyltetrahydrofolate. This Ruthia magnifica subsp. Calyptogena magnifica protein is Bifunctional protein FolD.